Here is a 197-residue protein sequence, read N- to C-terminus: HTH-type transcriptional repressor BdcR (197 aa).

Residues 15–75 (RFAPEQAISA…RVLNEYVGTE (61 aa)) form the HTH tetR-type domain. A DNA-binding region (H-T-H motif) is located at residues 38–57 (SVAEVTDYLGINPPSLYAAF).

Functionally, negatively regulates expression of bdcA. The chain is HTH-type transcriptional repressor BdcR (bdcR) from Escherichia coli (strain K12).